A 262-amino-acid chain; its full sequence is Troponin T, slow skeletal muscle (262 aa).

Residues 1–31 (MSDAEEQEYEEEQPEEEEAAEEEEAPEEPEP) show a composition bias toward acidic residues. Disordered stretches follow at residues 1 to 59 (MSDA…PEGE), 107 to 153 (RAER…KKKV), and 165 to 197 (LVKAEQKRGKRQTGREMKQRILSERKKPLNIDH). S2 is subject to Phosphoserine; by CK2. Basic and acidic residues predominate over residues 32–41 (VAEREEERPK). Pro residues predominate over residues 43–55 (SRPVVPPLIPPKI). Basic and acidic residues-rich tracts occupy residues 107 to 149 (RAER…DDAK) and 177 to 197 (TGREMKQRILSERKKPLNIDH).

It belongs to the troponin T family. As to quaternary structure, interacts with TPM3.

In terms of biological role, troponin T is the tropomyosin-binding subunit of troponin, the thin filament regulatory complex which confers calcium-sensitivity to striated muscle actomyosin ATPase activity. This chain is Troponin T, slow skeletal muscle (TNNT1), found in Sus scrofa (Pig).